We begin with the raw amino-acid sequence, 603 residues long: UvrABC system protein C (603 aa).

The region spanning 13-92 (SSPGVYLMKD…IKQHHPKYNV (80 aa)) is the GIY-YIG domain. In terms of domain architecture, UVR spans 205-240 (EEVVKDLEKVIQKASDNLEFEQAANYYRTLSLIKQA).

This sequence belongs to the UvrC family. In terms of assembly, interacts with UvrB in an incision complex.

The protein resides in the cytoplasm. Functionally, the UvrABC repair system catalyzes the recognition and processing of DNA lesions. UvrC both incises the 5' and 3' sides of the lesion. The N-terminal half is responsible for the 3' incision and the C-terminal half is responsible for the 5' incision. This is UvrABC system protein C from Chlamydia pneumoniae (Chlamydophila pneumoniae).